A 291-amino-acid polypeptide reads, in one-letter code: tRNA dimethylallyltransferase (291 aa).

8–15 (GSTASGKT) serves as a coordination point for ATP. Position 10 to 15 (10 to 15 (TASGKT)) interacts with substrate. Positions 33 to 36 (DSLC) are interaction with substrate tRNA.

The protein belongs to the IPP transferase family. As to quaternary structure, monomer. It depends on Mg(2+) as a cofactor.

The catalysed reaction is adenosine(37) in tRNA + dimethylallyl diphosphate = N(6)-dimethylallyladenosine(37) in tRNA + diphosphate. Functionally, catalyzes the transfer of a dimethylallyl group onto the adenine at position 37 in tRNAs that read codons beginning with uridine, leading to the formation of N6-(dimethylallyl)adenosine (i(6)A). The sequence is that of tRNA dimethylallyltransferase from Aliarcobacter butzleri (strain RM4018) (Arcobacter butzleri).